The sequence spans 141 residues: uncharacterized protein (141 aa).

3 consecutive transmembrane segments (helical) span residues 32-52 (LIVLIFSILIAISAYISTSII), 69-89 (IIALISTFIGGIVAWLIIAGF), and 109-129 (FTGYGFLPNIVGALITIPIAY).

The protein resides in the cell membrane. This is an uncharacterized protein from Methanocaldococcus jannaschii (strain ATCC 43067 / DSM 2661 / JAL-1 / JCM 10045 / NBRC 100440) (Methanococcus jannaschii).